A 248-amino-acid chain; its full sequence is tRNA (guanine-N(1)-)-methyltransferase (248 aa).

Residues Gly113 and 133–138 contribute to the S-adenosyl-L-methionine site; that span reads LGDFVL.

This sequence belongs to the RNA methyltransferase TrmD family. In terms of assembly, homodimer.

It localises to the cytoplasm. The enzyme catalyses guanosine(37) in tRNA + S-adenosyl-L-methionine = N(1)-methylguanosine(37) in tRNA + S-adenosyl-L-homocysteine + H(+). Its function is as follows. Specifically methylates guanosine-37 in various tRNAs. This Albidiferax ferrireducens (strain ATCC BAA-621 / DSM 15236 / T118) (Rhodoferax ferrireducens) protein is tRNA (guanine-N(1)-)-methyltransferase.